Here is a 144-residue protein sequence, read N- to C-terminus: Ribonuclease VapC37 (144 aa).

A PINc domain is found at Ile3–Trp137. Residues Asp5 and Asp90 each coordinate Mg(2+).

The protein belongs to the PINc/VapC protein family. Mg(2+) is required as a cofactor.

It localises to the secreted. In terms of biological role, probable toxic component of a type II toxin-antitoxin (TA) system. An RNase. Upon expression in M.smegmatis inhibits colony formation. The putative cognate antitoxin is VapB37. This is Ribonuclease VapC37 from Mycobacterium tuberculosis (strain ATCC 25618 / H37Rv).